A 249-amino-acid chain; its full sequence is Suppressor of silencing P0 (249 aa).

The 5-residue stretch at 63–67 (LPFHL) folds into the F-box-like domain.

It belongs to the polerovirus P0 protein family. Interacts (via F-box-like domain) with host AGO1; this interaction targets AGO1 for degradation, and thereby suppresses the silencing function of the latter. Interacts (via F-box-like domain) with host ASK1 and ASK2 (SKP proteins); these interactions are essential for viral pathogenicity. Part of a SCF P0 complex composed of P0 and the host proteins SKP and CUL1.

In terms of biological role, suppressor of RNA-mediated gene silencing, also known as post-transcriptional gene silencing (PTGS), a mechanism of plant viral defense that limits the accumulation of viral RNAs. The P0 protein suppresses local PTGS using its F-box-like domain to mediate destabilization and degradation of the AGO1 protein. The protein is Suppressor of silencing P0 of Turnip yellows virus (isolate FL-1) (TuYV).